We begin with the raw amino-acid sequence, 160 residues long: Eukaryotic translation initiation factor 5A-1/2 (160 aa).

Positions Met-1–Ala-12 are enriched in basic and acidic residues. The segment at Met-1 to Pro-21 is disordered. At Lys-52 the chain carries Hypusine.

This sequence belongs to the eIF-5A family. In terms of processing, lys-52 undergoes hypusination, a unique post-translational modification that consists in the addition of a butylamino group from spermidine to lysine side chain, leading to the formation of the unusual amino acid hypusine. eIF-5As are the only known proteins to undergo this modification, which is essential for their function.

In terms of biological role, translation factor that promotes translation elongation and termination, particularly upon ribosome stalling at specific amino acid sequence contexts. Binds between the exit (E) and peptidyl (P) site of the ribosome and promotes rescue of stalled ribosome: specifically required for efficient translation of polyproline-containing peptides as well as other motifs that stall the ribosome. Acts as a ribosome quality control (RQC) cofactor by joining the RQC complex to facilitate peptidyl transfer during CAT tailing step. In Solanum tuberosum (Potato), this protein is Eukaryotic translation initiation factor 5A-1/2 (EIF5A1).